The chain runs to 215 residues: UPF0502 protein YceH (215 aa).

An N6-acetyllysine modification is found at lysine 80.

The protein belongs to the UPF0502 family.

This is UPF0502 protein YceH from Escherichia coli O7:K1 (strain IAI39 / ExPEC).